Reading from the N-terminus, the 463-residue chain is Probable diacyglycerol O-acyltransferase tgs1 (463 aa).

Methionine 1 is subject to N-acetylmethionine. Catalysis depends on histidine 137, which acts as the Proton acceptor.

It belongs to the long-chain O-acyltransferase family.

It carries out the reaction an acyl-CoA + a 1,2-diacyl-sn-glycerol = a triacyl-sn-glycerol + CoA. The enzyme catalyses di-(9Z)-octadecenoylglycerol + (9Z)-octadecenoyl-CoA = 1,2,3-tri-(9Z-octadecenoyl)-glycerol + CoA. The protein operates within glycerolipid metabolism; triacylglycerol biosynthesis. Its function is as follows. Catalyzes the terminal and only committed step in triacylglycerol synthesis by using diacylglycerol and fatty acyl CoA as substrates. Required for storage lipid synthesis. Functionally, upon expression in E.coli functions as a triacylglycerol synthase, making triacylglycerol (TG) from diolein and long-chain fatty acyl-CoA. Prefers C(26:0)-CoA over C(18:1)-CoA. TG synthesis activity increases in M.tuberculosis upon oxygen depletion and NO treatment, with concomitant accumulation of TG in inclusion bodies. As disruption of the gene encoding this protein obviates TG synthesis this seems to be the major enzyme involved in production of TG. Has no wax synthase activity to produce wax esters. This chain is Probable diacyglycerol O-acyltransferase tgs1 (tgs1), found in Mycobacterium tuberculosis (strain ATCC 25618 / H37Rv).